A 147-amino-acid polypeptide reads, in one-letter code: uncharacterized protein (147 aa).

This sequence to B.subtilis XkdM.

This is an uncharacterized protein from Bacillus subtilis (strain 168).